A 244-amino-acid polypeptide reads, in one-letter code: 6-carboxyhexanoate--CoA ligase (244 aa).

The protein belongs to the BioW family. As to quaternary structure, homodimer. Mg(2+) is required as a cofactor.

The enzyme catalyses heptanedioate + ATP + CoA = 6-carboxyhexanoyl-CoA + AMP + diphosphate. It participates in metabolic intermediate metabolism; pimeloyl-CoA biosynthesis; pimeloyl-CoA from pimelate: step 1/1. Catalyzes the transformation of pimelate into pimeloyl-CoA with concomitant hydrolysis of ATP to AMP. In Methanococcus maripaludis (strain DSM 14266 / JCM 13030 / NBRC 101832 / S2 / LL), this protein is 6-carboxyhexanoate--CoA ligase.